The following is a 261-amino-acid chain: Protein phosphatase inhibitor 2 (261 aa).

The segment covering 1–16 (MNKDEEFLEEHHYKDD) has biased composition (basic and acidic residues). A required for binding to pppB region spans residues 1–150 (MNKDEEFLEE…TPYHYYESEE (150 aa)). Residues 1–261 (MNKDEEFLEE…LNANLSDDEQ (261 aa)) form a disordered region. Positions 17–60 (DAIEGEEEQGEEEESDLDDDMYNIDGETNDDDDDDEAEDEESSE) are enriched in acidic residues. Residues 123 to 134 (LTINDMNKSSTM) are compositionally biased toward polar residues. Residues 150–242 (EETDESKKYL…KKFDNLRKAH (93 aa)) adopt a coiled-coil conformation. The span at 154–163 (ESKKYLENKF) shows a compositional bias: basic and acidic residues. Basic residues predominate over residues 195–206 (DKKKKKKNLKIH). Over residues 212–225 (DDNDDNEDEDEDET) the composition is skewed to acidic residues. A compositionally biased stretch (basic and acidic residues) spans 226 to 250 (EEKKENKKKFDNLRKAHYNEFKVVR).

Belongs to the protein phosphatase inhibitor 2 family. As to quaternary structure, interacts with pppB.

Its function is as follows. Inhibitor of protein-phosphatase 1 (PP1). In Dictyostelium discoideum (Social amoeba), this protein is Protein phosphatase inhibitor 2 (dpiA).